A 309-amino-acid polypeptide reads, in one-letter code: Porphobilinogen deaminase (309 aa).

At Cys-244 the chain carries S-(dipyrrolylmethanemethyl)cysteine.

This sequence belongs to the HMBS family. Monomer. It depends on dipyrromethane as a cofactor.

It catalyses the reaction 4 porphobilinogen + H2O = hydroxymethylbilane + 4 NH4(+). Its pathway is porphyrin-containing compound metabolism; protoporphyrin-IX biosynthesis; coproporphyrinogen-III from 5-aminolevulinate: step 2/4. Functionally, tetrapolymerization of the monopyrrole PBG into the hydroxymethylbilane pre-uroporphyrinogen in several discrete steps. This chain is Porphobilinogen deaminase, found in Listeria monocytogenes serotype 4b (strain CLIP80459).